The primary structure comprises 139 residues: 6,7-dimethyl-8-ribityllumazine synthase (139 aa).

5-amino-6-(D-ribitylamino)uracil contacts are provided by residues Phe-11, 42 to 44, and 66 to 68; these read ALE and VVI. 71–72 serves as a coordination point for (2S)-2-hydroxy-3-oxobutyl phosphate; it reads ET. His-74 functions as the Proton donor in the catalytic mechanism. A 5-amino-6-(D-ribitylamino)uracil-binding site is contributed by Asn-98. Arg-112 contacts (2S)-2-hydroxy-3-oxobutyl phosphate.

Belongs to the DMRL synthase family.

It carries out the reaction (2S)-2-hydroxy-3-oxobutyl phosphate + 5-amino-6-(D-ribitylamino)uracil = 6,7-dimethyl-8-(1-D-ribityl)lumazine + phosphate + 2 H2O + H(+). The protein operates within cofactor biosynthesis; riboflavin biosynthesis; riboflavin from 2-hydroxy-3-oxobutyl phosphate and 5-amino-6-(D-ribitylamino)uracil: step 1/2. Functionally, catalyzes the formation of 6,7-dimethyl-8-ribityllumazine by condensation of 5-amino-6-(D-ribitylamino)uracil with 3,4-dihydroxy-2-butanone 4-phosphate. This is the penultimate step in the biosynthesis of riboflavin. The chain is 6,7-dimethyl-8-ribityllumazine synthase from Zymomonas mobilis subsp. mobilis (strain ATCC 31821 / ZM4 / CP4).